The following is a 207-amino-acid chain: 3-isopropylmalate dehydratase small subunit (207 aa).

Belongs to the LeuD family. LeuD type 1 subfamily. As to quaternary structure, heterodimer of LeuC and LeuD.

The enzyme catalyses (2R,3S)-3-isopropylmalate = (2S)-2-isopropylmalate. Its pathway is amino-acid biosynthesis; L-leucine biosynthesis; L-leucine from 3-methyl-2-oxobutanoate: step 2/4. Functionally, catalyzes the isomerization between 2-isopropylmalate and 3-isopropylmalate, via the formation of 2-isopropylmaleate. The protein is 3-isopropylmalate dehydratase small subunit of Acidithiobacillus ferrooxidans (strain ATCC 23270 / DSM 14882 / CIP 104768 / NCIMB 8455) (Ferrobacillus ferrooxidans (strain ATCC 23270)).